The following is a 466-amino-acid chain: Putative multidrug resistance protein MdtD (466 aa).

Transmembrane regions (helical) follow at residues 11–31 (LWIV…VNTA), 48–68 (SVIV…GWLA), 71–91 (IGVK…SLLC), 105–125 (VIQG…VMKI), 137–157 (FVTL…GFLV), 164–184 (WIFL…WFLM), 194–214 (FDIS…LALD), 218–238 (SLGI…IALL), 262–282 (FSIG…LPFM), 286–306 (FLQL…VPMV), 328–347 (VLIV…ALVA), 351–370 (WIWM…AIRF), 403–423 (LGVS…MAAG), and 429–449 (MVFI…ALIF).

Belongs to the major facilitator superfamily. TCR/Tet family.

It localises to the cell inner membrane. The polypeptide is Putative multidrug resistance protein MdtD (Pectobacterium carotovorum subsp. carotovorum (strain PC1)).